The primary structure comprises 161 residues: Large ribosomal subunit protein uL10 (161 aa).

It belongs to the universal ribosomal protein uL10 family. In terms of assembly, part of the ribosomal stalk of the 50S ribosomal subunit. The N-terminus interacts with L11 and the large rRNA to form the base of the stalk. The C-terminus forms an elongated spine to which L12 dimers bind in a sequential fashion forming a multimeric L10(L12)X complex.

Its function is as follows. Forms part of the ribosomal stalk, playing a central role in the interaction of the ribosome with GTP-bound translation factors. The chain is Large ribosomal subunit protein uL10 from Campylobacter fetus subsp. fetus (strain 82-40).